The sequence spans 243 residues: Orotidine 5'-phosphate decarboxylase (243 aa).

Residues Asp-19, Lys-41, 69–78 (DLKFFDIPAT), Thr-124, Arg-185, Gln-194, Gly-214, and Arg-215 contribute to the substrate site. Lys-71 acts as the Proton donor in catalysis.

This sequence belongs to the OMP decarboxylase family. Type 1 subfamily. Homodimer.

It catalyses the reaction orotidine 5'-phosphate + H(+) = UMP + CO2. The protein operates within pyrimidine metabolism; UMP biosynthesis via de novo pathway; UMP from orotate: step 2/2. Its function is as follows. Catalyzes the decarboxylation of orotidine 5'-monophosphate (OMP) to uridine 5'-monophosphate (UMP). The polypeptide is Orotidine 5'-phosphate decarboxylase (Xanthomonas oryzae pv. oryzae (strain MAFF 311018)).